The following is a 462-amino-acid chain: Adenosylhomocysteinase (462 aa).

Substrate contacts are provided by T55, D128, and E188. 189 to 191 serves as a coordination point for NAD(+); the sequence is TTT. Substrate-binding residues include K218 and D222. NAD(+) contacts are provided by residues N223, 252–257, E275, N310, 331–333, and N376; these read GYGDVG and IGH.

This sequence belongs to the adenosylhomocysteinase family. NAD(+) is required as a cofactor.

It localises to the cytoplasm. It catalyses the reaction S-adenosyl-L-homocysteine + H2O = L-homocysteine + adenosine. It participates in amino-acid biosynthesis; L-homocysteine biosynthesis; L-homocysteine from S-adenosyl-L-homocysteine: step 1/1. Its function is as follows. May play a key role in the regulation of the intracellular concentration of adenosylhomocysteine. The polypeptide is Adenosylhomocysteinase (Roseobacter denitrificans (strain ATCC 33942 / OCh 114) (Erythrobacter sp. (strain OCh 114))).